Reading from the N-terminus, the 237-residue chain is Octanoyltransferase (237 aa).

In terms of domain architecture, BPL/LPL catalytic spans 27-210; it reads SGGDDILLLL…EFYHIFQPAG (184 aa). Substrate-binding positions include 72–79, 139–141, and 152–154; these read RGGNVTCH, SLG, and GMA. The active-site Acyl-thioester intermediate is the cysteine 170.

Belongs to the LipB family.

Its subcellular location is the cytoplasm. The catalysed reaction is octanoyl-[ACP] + L-lysyl-[protein] = N(6)-octanoyl-L-lysyl-[protein] + holo-[ACP] + H(+). It participates in protein modification; protein lipoylation via endogenous pathway; protein N(6)-(lipoyl)lysine from octanoyl-[acyl-carrier-protein]: step 1/2. Catalyzes the transfer of endogenously produced octanoic acid from octanoyl-acyl-carrier-protein onto the lipoyl domains of lipoate-dependent enzymes. Lipoyl-ACP can also act as a substrate although octanoyl-ACP is likely to be the physiological substrate. The chain is Octanoyltransferase from Desulfovibrio desulfuricans (strain ATCC 27774 / DSM 6949 / MB).